We begin with the raw amino-acid sequence, 310 residues long: Bis(hydroxyethyl) terephthalate hydrolase (310 aa).

A signal peptide (tat-type signal) is located at residues Met-1 to Ala-48. A bis(2-hydroxyethyl) terephthalate-binding site is contributed by Phe-111. The active-site Nucleophile is Ser-179. Bis(2-hydroxyethyl) terephthalate-binding residues include Met-180 and Trp-204. Active-site charge relay system residues include Asp-225 and His-257. Cysteines 290 and 306 form a disulfide.

It belongs to the AB hydrolase superfamily. Predicted to be exported by the Tat system. The position of the signal peptide cleavage has not been experimentally proven.

The protein localises to the secreted. The catalysed reaction is bis(2-hydroxyethyl) terephthalate + H2O = 4-[(2-hydroxyethoxy)carbonyl]benzoate + ethylene glycol + H(+). Its function is as follows. Catalyzes the degradation of bis(hydroxyethyl) terephthalate (BHET), a derived-oligomer of the plastic poly(ethylene terephthalate) (PET), hydrolyzing BHET to mono(2-hydroxyethyl) terephthalate (MHET). Shows no activity against PET. In Streptomyces coelicolor (strain ATCC BAA-471 / A3(2) / M145), this protein is Bis(hydroxyethyl) terephthalate hydrolase.